The following is a 156-amino-acid chain: ATP synthase subunit b (156 aa).

Residues 5–25 traverse the membrane as a helical segment; that stretch reads LTLIGQAIAFAFFVAFCMKFV.

Belongs to the ATPase B chain family. F-type ATPases have 2 components, F(1) - the catalytic core - and F(0) - the membrane proton channel. F(1) has five subunits: alpha(3), beta(3), gamma(1), delta(1), epsilon(1). F(0) has three main subunits: a(1), b(2) and c(10-14). The alpha and beta chains form an alternating ring which encloses part of the gamma chain. F(1) is attached to F(0) by a central stalk formed by the gamma and epsilon chains, while a peripheral stalk is formed by the delta and b chains.

The protein localises to the cell inner membrane. Functionally, f(1)F(0) ATP synthase produces ATP from ADP in the presence of a proton or sodium gradient. F-type ATPases consist of two structural domains, F(1) containing the extramembraneous catalytic core and F(0) containing the membrane proton channel, linked together by a central stalk and a peripheral stalk. During catalysis, ATP synthesis in the catalytic domain of F(1) is coupled via a rotary mechanism of the central stalk subunits to proton translocation. Component of the F(0) channel, it forms part of the peripheral stalk, linking F(1) to F(0). The sequence is that of ATP synthase subunit b from Acinetobacter baumannii (strain SDF).